A 708-amino-acid chain; its full sequence is Leukotoxin translocation ATP-binding protein LktB (708 aa).

One can recognise a Peptidase C39 domain in the interval 1–126; it reads MEANHQRNDL…ACYQGQLILV (126 aa). The ABC transmembrane type-1 domain occupies 155 to 437; that stretch reads FLETLIVSIF…LAQLWQDFQQ (283 aa). The next 5 helical transmembrane spans lie at 159-179, 192-212, 270-290, 296-316, and 389-409; these read LIVSIFLQIFALITPLFFQVV, LNIITVALAIVIIFEIVLSGL, ALTSVLDLLFSFIFFAVMWYY, LVILGSLPCYILWSIFISPIL, and VMVINLWLGAHLVISGDLSIG. One can recognise an ABC transporter domain in the interval 469-704; it reads ISFKNIRFRY…SNGLYSYLHQ (236 aa). Position 503–510 (503–510) interacts with ATP; that stretch reads GRSGSGKS.

Belongs to the ABC transporter superfamily. Protein-1 exporter (TC 3.A.1.109) family. In terms of assembly, homodimer.

It localises to the cell inner membrane. It carries out the reaction ATP + H2O + proteinSide 1 = ADP + phosphate + proteinSide 2.. In terms of biological role, part of the ABC transporter complex LktBD involved in leukotoxin export. Transmembrane domains (TMD) form a pore in the inner membrane and the ATP-binding domain (NBD) is responsible for energy generation. This is Leukotoxin translocation ATP-binding protein LktB (lktB) from Mannheimia haemolytica (Pasteurella haemolytica).